The chain runs to 437 residues: UDP-N-acetylmuramate--L-alanine ligase (437 aa).

108–114 is a binding site for ATP; it reads GAHGKTS.

Belongs to the MurCDEF family.

It is found in the cytoplasm. The catalysed reaction is UDP-N-acetyl-alpha-D-muramate + L-alanine + ATP = UDP-N-acetyl-alpha-D-muramoyl-L-alanine + ADP + phosphate + H(+). It functions in the pathway cell wall biogenesis; peptidoglycan biosynthesis. Cell wall formation. The sequence is that of UDP-N-acetylmuramate--L-alanine ligase from Staphylococcus aureus.